A 681-amino-acid polypeptide reads, in one-letter code: Proline-rich receptor-like protein kinase PERK8 (681 aa).

Residues 1–11 show a composition bias toward pro residues; that stretch reads MSLVPPLPILS. The disordered stretch occupies residues 1–231; the sequence is MSLVPPLPIL…TLPSSSPGKS (231 aa). Residues 1–237 are Extracellular-facing; it reads MSLVPPLPIL…PGKSEVGTGG (237 aa). Asn-16 carries an N-linked (GlcNAc...) asparagine glycan. Pro residues predominate over residues 21 to 163; it reads APPPLQTQPT…SPPKPSPSTP (143 aa). The segment covering 177 to 191 has biased composition (low complexity); it reads TSASPPSSNPTDPST. Residues 192 to 201 are compositionally biased toward pro residues; that stretch reads LAPPPTPLPV. Positions 214-229 are enriched in polar residues; the sequence is PASNNGNNTLPSSSPG. The N-linked (GlcNAc...) asparagine glycan is linked to Asn-220. Residues 238–258 traverse the membrane as a helical segment; the sequence is IVAIGVIVGLVFLSLFVMGVW. Residues 259–681 are Cytoplasmic-facing; it reads FTRKRKRKDP…GSRDQSRFVP (423 aa). The region spanning 339-617 is the Protein kinase domain; that stretch reads FSEKNLLGEG…SQVVRALDTL (279 aa). Residues 345–353 and Lys-367 each bind ATP; that span reads LGEGGFGCV. At Tyr-412 the chain carries Phosphotyrosine. The Proton acceptor role is filled by Asp-463. Phosphoserine is present on residues Ser-467 and Ser-498. Residues Thr-499 and Thr-504 each carry the phosphothreonine modification. Residue Tyr-512 is modified to Phosphotyrosine.

Belongs to the protein kinase superfamily. Ser/Thr protein kinase family. Interacts with KIPK1 and KIPK2 (via its cytosolic domain). As to expression, mostly expressed in seedlings, roots, inflorescence bolts and flower buds.

It is found in the cell membrane. The catalysed reaction is L-seryl-[protein] + ATP = O-phospho-L-seryl-[protein] + ADP + H(+). It carries out the reaction L-threonyl-[protein] + ATP = O-phospho-L-threonyl-[protein] + ADP + H(+). Functionally, could be involved in the negative regulation of root growth. This chain is Proline-rich receptor-like protein kinase PERK8 (PERK8), found in Arabidopsis thaliana (Mouse-ear cress).